A 150-amino-acid polypeptide reads, in one-letter code: uncharacterized protein (150 aa).

An HTH marR-type domain is found at 1-133; sequence MNDILREIGM…ISALLHRVRK (133 aa). The segment at residues 47–70 is a DNA-binding region (H-T-H motif); that stretch reads QEKLAEMIKVDRTTAARAIKKLEM.

This is an uncharacterized protein from Bacillus subtilis (strain 168).